A 1332-amino-acid polypeptide reads, in one-letter code: Misshapen-like kinase 1 (1332 aa).

Residues 25–289 (FELVEVVGNG…TEQLLKFPFI (265 aa)) form the Protein kinase domain. Residues 31 to 39 (VGNGTYGQV) and K54 each bind ATP. The active-site Proton acceptor is D153. 3 disordered regions span residues 300-347 (IQLK…NVPG), 363-383 (KSNSEALKQQQQLQQQQQRDP), and 395-887 (QRRI…GTMV). The span at 317–333 (EETEYEYSGSEEEDDSH) shows a compositional bias: acidic residues. 2 positions are modified to phosphoserine: S324 and S326. Residues 371 to 380 (QQQQLQQQQQ) are compositionally biased toward low complexity. Over residues 396–466 (RRIEEQKEER…EEQRQSERLQ (71 aa)) the composition is skewed to basic and acidic residues. Positions 479-497 (LQQQQQQQQLQKQQQQQLL) are enriched in low complexity. Residues R501 and R509 each carry the omega-N-methylarginine modification. A compositionally biased stretch (basic and acidic residues) spans 518-528 (AWAREVEERTR). Residues 547-561 (PEPPIPQASPGPPGP) are compositionally biased toward pro residues. The segment covering 598-608 (RSQSLQDQPTR) has biased composition (polar residues). S641 bears the Phosphoserine mark. The span at 670 to 682 (QRTSSIATALNTS) shows a compositional bias: polar residues. S701 carries the phosphoserine modification. The span at 716–729 (PKPPGPPAQPPGPP) shows a compositional bias: pro residues. A compositionally biased stretch (basic and acidic residues) spans 736 to 748 (DLRRSDPGWERSD). 5 positions are modified to phosphoserine: S754, S763, S777, S778, and S782. Positions 804 to 821 (LLKERTLDEAPRPPKKAM) are enriched in basic and acidic residues. Positions 828–841 (EEVESSEDDEEEGE) are enriched in acidic residues. The interval 866 to 1332 (MVVHDVEEIT…TLNRNCIMNW (467 aa)) is mediates interaction with RAP2A. T891 bears the Phosphothreonine mark. Residues 902-943 (DSNGYTNLPDVVQPSHSPTENSKGQSPPSKDGSGDYQSRGLV) form a disordered region. The segment covering 915 to 929 (PSHSPTENSKGQSPP) has biased composition (polar residues). The 288-residue stretch at 1019-1306 (NSEILCAALW…KFLCERNDKV (288 aa)) folds into the CNH domain.

This sequence belongs to the protein kinase superfamily. STE Ser/Thr protein kinase family. STE20 subfamily. Interacts with TANC1. Interacts with RAP2A. Isoform 4 interacts with NCK1. Mg(2+) serves as cofactor. In terms of processing, autophosphorylated. In terms of tissue distribution, expressed in the brain, isoform 2 is more abundant than isoform 1. Isoform 3 is ubiquitously expressed. Isoform 1 is most abundant in the skeletal muscle. Isoform 4 is ubiquitously expressed with relative high levels in brain, skeletal muscle, pancreas and testis.

It is found in the cytoplasm. Its subcellular location is the postsynaptic density. The protein resides in the cell projection. The protein localises to the axon. It localises to the dendrite. It is found in the golgi apparatus. The catalysed reaction is L-seryl-[protein] + ATP = O-phospho-L-seryl-[protein] + ADP + H(+). The enzyme catalyses L-threonyl-[protein] + ATP = O-phospho-L-threonyl-[protein] + ADP + H(+). Its function is as follows. Serine/threonine kinase which acts as a negative regulator of Ras-related Rap2-mediated signal transduction to control neuronal structure and AMPA receptor trafficking. Required for normal synaptic density, dendrite complexity, as well as surface AMPA receptor expression in hippocampal neurons. Can activate the JNK and MAPK14/p38 pathways and mediates stimulation of the stress-activated protein kinase MAPK14/p38 MAPK downstream of the Raf/ERK pathway. Phosphorylates TANC1 upon stimulation by RAP2A, MBP and SMAD1. Has an essential function in negative selection of thymocytes, perhaps by coupling NCK1 to activation of JNK1. Activator of the Hippo signaling pathway which plays a pivotal role in organ size control and tumor suppression by restricting proliferation and promoting apoptosis. MAP4Ks act in parallel to and are partially redundant with STK3/MST2 and STK4/MST2 in the phosphorylation and activation of LATS1/2, and establish MAP4Ks as components of the expanded Hippo pathway. Isoform 4 can activate the JNK pathway. Involved in the regulation of actin cytoskeleton reorganization, cell-matrix adhesion, cell-cell adhesion and cell migration. This Homo sapiens (Human) protein is Misshapen-like kinase 1.